A 354-amino-acid chain; its full sequence is UDP-N-acetylglucosamine--N-acetylmuramyl-(pentapeptide) pyrophosphoryl-undecaprenol N-acetylglucosamine transferase (354 aa).

Residues 15-17 (TGG), Asn-127, Arg-163, Ser-191, Ile-244, 263-268 (ALTVSE), and Gln-288 contribute to the UDP-N-acetyl-alpha-D-glucosamine site.

Belongs to the glycosyltransferase 28 family. MurG subfamily.

The protein resides in the cell inner membrane. The enzyme catalyses di-trans,octa-cis-undecaprenyl diphospho-N-acetyl-alpha-D-muramoyl-L-alanyl-D-glutamyl-meso-2,6-diaminopimeloyl-D-alanyl-D-alanine + UDP-N-acetyl-alpha-D-glucosamine = di-trans,octa-cis-undecaprenyl diphospho-[N-acetyl-alpha-D-glucosaminyl-(1-&gt;4)]-N-acetyl-alpha-D-muramoyl-L-alanyl-D-glutamyl-meso-2,6-diaminopimeloyl-D-alanyl-D-alanine + UDP + H(+). The protein operates within cell wall biogenesis; peptidoglycan biosynthesis. Functionally, cell wall formation. Catalyzes the transfer of a GlcNAc subunit on undecaprenyl-pyrophosphoryl-MurNAc-pentapeptide (lipid intermediate I) to form undecaprenyl-pyrophosphoryl-MurNAc-(pentapeptide)GlcNAc (lipid intermediate II). The polypeptide is UDP-N-acetylglucosamine--N-acetylmuramyl-(pentapeptide) pyrophosphoryl-undecaprenol N-acetylglucosamine transferase (Aliivibrio salmonicida (strain LFI1238) (Vibrio salmonicida (strain LFI1238))).